We begin with the raw amino-acid sequence, 763 residues long: Pentatricopeptide repeat-containing protein At4g32430, mitochondrial (763 aa).

Residues 1–38 constitute a mitochondrion transit peptide; it reads MTLLNYLHCNRSKSFLFQRFYSPYRIAHKLFDGSSQRN. 17 PPR repeats span residues 77-109, 110-140, 141-172, 173-207, 208-238, 239-274, 275-309, 310-344, 350-370, 371-405, 406-436, 437-471, 472-507, 508-538, 539-573, 574-604, and 610-640; these read DEVTLCLALKACRGDLKRGCQIHGFSTTSGFTS, FVCVSNAVMGMYRKAGRFDNALCIFENLVDP, DVVSWNTILSGFDDNQIALNFVVRMKSAGVVF, DAFTYSTALSFCVGSEGFLLGLQLQSTVVKTGLES, DLVVGNSFITMYSRSGSFRGARRVFDEMSFK, DMISWNSLLSGLSQEGTFGFEAVVIFRDMMREGVEL, DHVSFTSVITTCCHETDLKLARQIHGLCIKRGYES, LLEVGNILMSRYSKCGVLEAVKSVFHQMSERNVVS, SSNKDDAVSIFLNMRFDGVYP, NEVTFVGLINAVKCNEQIKEGLKIHGLCIKTGFVS, EPSVGNSFITLYAKFEALEDAKKAFEDITFR, EIISWNAMISGFAQNGFSHEALKMFLSAAAETMPN, EYTFGSVLNAIAFAEDISVKQGQRCHAHLLKLGLNS, CPVVSSALLDMYAKRGNIDESEKVFNEMSQK, NQFVWTSIISAYSSHGDFETVMNLFHKMIKENVAP, DLVTFLSVLTACNRKGMVDKGYEIFNMMIEV, and SHEHYSCMVDMLGRAGRLKEAEELMSEVPGG. Residues 645-720 form a type E motif region; it reads MLQSMLGSCR…EAGFSWIDVG (76 aa). Residues 724-756 are type E(+) motif; sequence GSLTMQGFSSGDKSHPKSDEIYRMVEIIGLEMN.

The protein belongs to the PPR family. PCMP-E subfamily.

It localises to the mitochondrion. The sequence is that of Pentatricopeptide repeat-containing protein At4g32430, mitochondrial (PCMP-E40) from Arabidopsis thaliana (Mouse-ear cress).